The primary structure comprises 144 residues: Large ribosomal subunit protein uL16 (144 aa).

Residues methionine 1 to glycine 19 are compositionally biased toward basic residues. The segment at methionine 1 to glycine 23 is disordered.

The protein belongs to the universal ribosomal protein uL16 family. Part of the 50S ribosomal subunit.

Binds 23S rRNA and is also seen to make contacts with the A and possibly P site tRNAs. The protein is Large ribosomal subunit protein uL16 of Staphylococcus haemolyticus (strain JCSC1435).